The primary structure comprises 64 residues: Large ribosomal subunit protein bL35 (64 aa).

The segment at 1–25 (MPKMKTHRGAAKRLKKTGTGKLKRA) is disordered.

Belongs to the bacterial ribosomal protein bL35 family.

The chain is Large ribosomal subunit protein bL35 from Clostridioides difficile (strain 630) (Peptoclostridium difficile).